The chain runs to 784 residues: E3 UFM1-protein ligase 1 homolog (784 aa).

Residues 405-480 are disordered; it reads SVSTQELEDD…RGGGAGNKKA (76 aa). Basic residues predominate over residues 444-454; the sequence is KSTKKHQRGKA.

The protein belongs to the UFL1 family.

Functionally, E3 UFM1-protein ligase that mediates ufmylation of target proteins. This chain is E3 UFM1-protein ligase 1 homolog, found in Drosophila yakuba (Fruit fly).